Reading from the N-terminus, the 623-residue chain is MAU2 chromatid cohesion factor homolog (623 aa).

TPR repeat units lie at residues 96 to 129, 451 to 484, and 491 to 524; these read FDTA…SQNN, GGFY…ANAE, and SCSL…ASKI.

The protein belongs to the SCC4/mau-2 family. Interacts with Nipped-B to form the cohesin loading complex.

The protein resides in the nucleus. It is found in the nucleoplasm. Functionally, required for association of the cohesin complex with chromatin during interphase. Plays a role in sister chromatid cohesion and normal progression through prometaphase. The chain is MAU2 chromatid cohesion factor homolog from Drosophila grimshawi (Hawaiian fruit fly).